Reading from the N-terminus, the 455-residue chain is UDP-glycosyltransferase 75B2 (455 aa).

The active-site Proton acceptor is the His16. His16 contributes to the an anthocyanidin binding site. UDP-alpha-D-glucose is bound by residues Gln337, His352, Trp355, Ser357, Glu360, Asp376, and Gln377.

It belongs to the UDP-glycosyltransferase family.

It carries out the reaction (indol-3-yl)acetate + UDP-alpha-D-glucose = 1-O-(indol-3-ylacetyl)-beta-D-glucose + UDP. It functions in the pathway plant hormone metabolism; auxin conjugation. In terms of biological role, possesses low catalytic activity in vitro. Also active as glucosyltransferase in vitro on benzoates and benzoate derivatives. This is UDP-glycosyltransferase 75B2 (UGT75B2) from Arabidopsis thaliana (Mouse-ear cress).